The primary structure comprises 359 residues: RNA 3'-terminal phosphate cyclase (359 aa).

ATP-binding positions include glutamine 100 and 291–294 (HASD). Residue histidine 317 is the Tele-AMP-histidine intermediate of the active site.

It belongs to the RNA 3'-terminal cyclase family. Type 1 subfamily.

It is found in the cytoplasm. It catalyses the reaction a 3'-end 3'-phospho-ribonucleotide-RNA + ATP = a 3'-end 2',3'-cyclophospho-ribonucleotide-RNA + AMP + diphosphate. Its function is as follows. Catalyzes the conversion of 3'-phosphate to a 2',3'-cyclic phosphodiester at the end of RNA. The mechanism of action of the enzyme occurs in 3 steps: (A) adenylation of the enzyme by ATP; (B) transfer of adenylate to an RNA-N3'P to produce RNA-N3'PP5'A; (C) and attack of the adjacent 2'-hydroxyl on the 3'-phosphorus in the diester linkage to produce the cyclic end product. The biological role of this enzyme is unknown but it is likely to function in some aspects of cellular RNA processing. The chain is RNA 3'-terminal phosphate cyclase from Hyperthermus butylicus (strain DSM 5456 / JCM 9403 / PLM1-5).